We begin with the raw amino-acid sequence, 342 residues long: Galactose mutarotase (342 aa).

Serine 14 carries the phosphoserine modification. Beta-D-galactose-binding positions include 81 to 82 (NR) and histidine 107. Serine 124 carries the phosphoserine modification. The active-site Proton donor is the histidine 176. Beta-D-galactose-binding positions include 176–178 (HSY), aspartate 243, glutamine 279, and glutamate 307. Glutamate 307 serves as the catalytic Proton acceptor.

The protein belongs to the aldose epimerase family. Monomer.

It is found in the cytoplasm. The catalysed reaction is alpha-D-galactose = beta-D-galactose. It carries out the reaction alpha-D-glucose = beta-D-glucose. It functions in the pathway carbohydrate metabolism; hexose metabolism. The protein operates within carbohydrate metabolism; galactose metabolism. Functionally, mutarotase that catalyzes the interconversion of beta-D-galactose and alpha-D-galactose during galactose metabolism. Beta-D-galactose is metabolized in the liver into glucose 1-phosphate, the primary metabolic fuel, by the action of four enzymes that constitute the Leloir pathway: GALM, GALK1 (galactokinase), GALT (galactose-1-phosphate uridylyltransferase) and GALE (UDP-galactose-4'-epimerase). Involved in the maintenance of the equilibrium between the beta- and alpha-anomers of galactose, therefore ensuring a sufficient supply of the alpha-anomer for GALK1. Also active on D-glucose although shows a preference for galactose over glucose. The chain is Galactose mutarotase (GALM) from Sus scrofa (Pig).